The chain runs to 275 residues: Acetyl-coenzyme A carboxylase carboxyl transferase subunit beta (275 aa).

One can recognise a CoA carboxyltransferase N-terminal domain in the interval 21-275 (GLWIKCQCGA…IKIIGMHQAG (255 aa)). Zn(2+) is bound by residues Cys-26, Cys-28, Cys-44, and Cys-47. The C4-type zinc-finger motif lies at 26–47 (CQCGAILFAKDLERNLKVCQKC).

Belongs to the AccD/PCCB family. In terms of assembly, acetyl-CoA carboxylase is a heterohexamer composed of biotin carboxyl carrier protein (AccB), biotin carboxylase (AccC) and two subunits each of ACCase subunit alpha (AccA) and ACCase subunit beta (AccD). Requires Zn(2+) as cofactor.

Its subcellular location is the cytoplasm. It catalyses the reaction N(6)-carboxybiotinyl-L-lysyl-[protein] + acetyl-CoA = N(6)-biotinyl-L-lysyl-[protein] + malonyl-CoA. It participates in lipid metabolism; malonyl-CoA biosynthesis; malonyl-CoA from acetyl-CoA: step 1/1. In terms of biological role, component of the acetyl coenzyme A carboxylase (ACC) complex. Biotin carboxylase (BC) catalyzes the carboxylation of biotin on its carrier protein (BCCP) and then the CO(2) group is transferred by the transcarboxylase to acetyl-CoA to form malonyl-CoA. This chain is Acetyl-coenzyme A carboxylase carboxyl transferase subunit beta, found in Desulforudis audaxviator (strain MP104C).